The following is a 307-amino-acid chain: Ribonuclease Z (307 aa).

The Zn(2+) site is built by H61, H63, D65, H66, H138, D208, and H264. The active-site Proton acceptor is the D65.

The protein belongs to the RNase Z family. In terms of assembly, homodimer. The cofactor is Zn(2+).

The catalysed reaction is Endonucleolytic cleavage of RNA, removing extra 3' nucleotides from tRNA precursor, generating 3' termini of tRNAs. A 3'-hydroxy group is left at the tRNA terminus and a 5'-phosphoryl group is left at the trailer molecule.. Its function is as follows. Zinc phosphodiesterase, which displays some tRNA 3'-processing endonuclease activity. Probably involved in tRNA maturation, by removing a 3'-trailer from precursor tRNA. This chain is Ribonuclease Z, found in Pyrococcus abyssi (strain GE5 / Orsay).